The sequence spans 248 residues: Coenzyme F420:L-glutamate ligase (248 aa).

GTP-binding positions include 15–18 (IPLI), 45–46 (ET), and Lys50. Asp115 provides a ligand contact to a divalent metal cation. Position 118 (Asn118) interacts with GTP. A divalent metal cation-binding residues include Asp155, Ser156, and Gln213. A GTP-binding site is contributed by 211–218 (MGQSNEGI).

The protein belongs to the CofE family. As to quaternary structure, homodimer. It depends on Mg(2+) as a cofactor. Mn(2+) serves as cofactor. Requires K(+) as cofactor.

It carries out the reaction oxidized coenzyme F420-0 + GTP + L-glutamate = oxidized coenzyme F420-1 + GDP + phosphate + H(+). It catalyses the reaction oxidized coenzyme F420-1 + GTP + L-glutamate = oxidized coenzyme F420-2 + GDP + phosphate + H(+). The protein operates within cofactor biosynthesis; coenzyme F420 biosynthesis. Its function is as follows. Catalyzes the GTP-dependent successive addition of two or more gamma-linked L-glutamates to the L-lactyl phosphodiester of 7,8-didemethyl-8-hydroxy-5-deazariboflavin (F420-0) to form coenzyme F420-0-glutamyl-glutamate (F420-2) or polyglutamated F420 derivatives. The chain is Coenzyme F420:L-glutamate ligase from Methanococcus maripaludis (strain C7 / ATCC BAA-1331).